The primary structure comprises 163 residues: Probable metallophosphoesterase MG207 (163 aa).

Residues Asp9, His11, Asp34, Asn53, His75, His107, and His109 each contribute to the Mn(2+) site.

It belongs to the metallophosphoesterase superfamily. YfcE family. Mn(2+) is required as a cofactor.

This is Probable metallophosphoesterase MG207 from Mycoplasma genitalium (strain ATCC 33530 / DSM 19775 / NCTC 10195 / G37) (Mycoplasmoides genitalium).